A 304-amino-acid polypeptide reads, in one-letter code: MIRQRTLKSIVQTTGVGLHSGRKVTLILRPAAANTGVIYRRTDLNPPVDFPADANSVRDTMLCTALVNEDGVRISTVEHLNAALAGMGIDNVIIEVDAPEIPIMDGSASPFIYLLQSAGIDTLNAPKRFLRIKKPVRIEDGDKWAELVPFNGFRLDFTIDFNHPAIDADQQRLVLDFSSQSFIKDISRARTFGFMRDIEYLQSQNLALGGSFDNAIVLDDYRILNDDGLRFDNELVTHKVLDAIGDLYMCGHNIIGEMRAYKSGHALNNQLLRAVLADQEAYEWATFQAEEVPVTFAQPGMVLA.

Positions 79, 238, and 242 each coordinate Zn(2+). His-265 (proton donor) is an active-site residue.

Belongs to the LpxC family. Zn(2+) serves as cofactor.

It carries out the reaction a UDP-3-O-[(3R)-3-hydroxyacyl]-N-acetyl-alpha-D-glucosamine + H2O = a UDP-3-O-[(3R)-3-hydroxyacyl]-alpha-D-glucosamine + acetate. It functions in the pathway glycolipid biosynthesis; lipid IV(A) biosynthesis; lipid IV(A) from (3R)-3-hydroxytetradecanoyl-[acyl-carrier-protein] and UDP-N-acetyl-alpha-D-glucosamine: step 2/6. Catalyzes the hydrolysis of UDP-3-O-myristoyl-N-acetylglucosamine to form UDP-3-O-myristoylglucosamine and acetate, the committed step in lipid A biosynthesis. In Photobacterium profundum (strain SS9), this protein is UDP-3-O-acyl-N-acetylglucosamine deacetylase.